Consider the following 303-residue polypeptide: Ribosomal protein L11 methyltransferase (303 aa).

T152, G173, D195, and N239 together coordinate S-adenosyl-L-methionine.

The protein belongs to the methyltransferase superfamily. PrmA family.

Its subcellular location is the cytoplasm. It carries out the reaction L-lysyl-[protein] + 3 S-adenosyl-L-methionine = N(6),N(6),N(6)-trimethyl-L-lysyl-[protein] + 3 S-adenosyl-L-homocysteine + 3 H(+). In terms of biological role, methylates ribosomal protein L11. The sequence is that of Ribosomal protein L11 methyltransferase from Desulforapulum autotrophicum (strain ATCC 43914 / DSM 3382 / VKM B-1955 / HRM2) (Desulfobacterium autotrophicum).